The primary structure comprises 584 residues: Putative adenine deaminase BA_3032/GBAA_3032/BAS2818 (584 aa).

Belongs to the metallo-dependent hydrolases superfamily. Adenine deaminase family.

It carries out the reaction adenine + H2O + H(+) = hypoxanthine + NH4(+). The protein is Putative adenine deaminase BA_3032/GBAA_3032/BAS2818 of Bacillus anthracis.